A 276-amino-acid chain; its full sequence is Diaminopimelate epimerase (276 aa).

The substrate site is built by Asn13, Gln46, and Asn66. The active-site Proton donor is the Cys75. Residues 76–77 (GN), Asn159, Asn192, and 210–211 (ER) each bind substrate. Cys219 acts as the Proton acceptor in catalysis. Residue 220-221 (GS) coordinates substrate.

It belongs to the diaminopimelate epimerase family. In terms of assembly, homodimer.

It localises to the cytoplasm. It catalyses the reaction (2S,6S)-2,6-diaminopimelate = meso-2,6-diaminopimelate. It functions in the pathway amino-acid biosynthesis; L-lysine biosynthesis via DAP pathway; DL-2,6-diaminopimelate from LL-2,6-diaminopimelate: step 1/1. Functionally, catalyzes the stereoinversion of LL-2,6-diaminopimelate (L,L-DAP) to meso-diaminopimelate (meso-DAP), a precursor of L-lysine and an essential component of the bacterial peptidoglycan. This chain is Diaminopimelate epimerase, found in Colwellia psychrerythraea (strain 34H / ATCC BAA-681) (Vibrio psychroerythus).